The primary structure comprises 571 residues: Optineurin (571 aa).

Disordered regions lie at residues 1 to 32 (MSHQ…HPNL) and 100 to 144 (LSHE…DQLR). A coiled-coil region spans residues 38–170 (EELLQQMKEL…VSELQLKLNS (133 aa)). The interaction with Rab8 stretch occupies residues 58-209 (MKLNNQAMKG…GPTRTVSIGT (152 aa)). The span at 100–143 (LSHENEKLKEELGKLKGKSERSSEDPTDDSRLPRAEAEQEKDQL) shows a compositional bias: basic and acidic residues. The LIR signature appears at 176 to 181 (DSFVEI). Phosphoserine; by TBK1 is present on Ser-177. The span at 186–197 (GEAEGSVKEIKH) shows a compositional bias: basic and acidic residues. Disordered regions lie at residues 186–210 (GEAE…IGTS) and 255–291 (VSDF…TVGS). Position 198 is a phosphoserine (Ser-198). Positions 201 to 210 (PTRTVSIGTS) are enriched in polar residues. The stretch at 233 to 502 (CLREGNQKVE…LLKENDAFED (270 aa)) forms a coiled coil. Composition is skewed to basic and acidic residues over residues 255–268 (VSDF…RSEI) and 275–286 (STEKENEEEKGP). A Phosphoserine modification is found at Ser-336. The interaction with HD stretch occupies residues 405–571 (TRKESEKVDR…LQIHVMDCII (167 aa)). The tract at residues 406–514 (RKESEKVDRA…RQSLMEMQSR (109 aa)) is interaction with MYO6. A UBAN motif is present at residues 468-473 (DFHAER). Ser-520 is modified (phosphoserine). The CCHC NOA-type zinc-finger motif lies at 541-571 (QRNIPIHSCPKCGEVLPDIDTLQIHVMDCII). Residues Cys-549, Cys-552, His-565, and Cys-569 each contribute to the Zn(2+) site.

Self-associates. Interacts with HD. Interacts with GTF3A. Interacts with MYO6. Interacts (via UBAN) with ubiquitinated TFRC. Interacts with GTP-bound Rab8 (RAB8A and/or RAB8B). Interacts with TBC1D17. Interacts with TBK1. Interacts with TRAF3. Binds to linear ubiquitin chains. Interacts with LC3 family members MAP1LC3A, MAP1LC3B, GABARAP, GABARAPL1 and GABARAPL2; OPTN phosphorylation increases the association (at least with MAP1LC3B). Interacts with RAB12; the interaction may be indirect. Interacts with TBK1; this interaction leads to the Golgi localization of TBK1 and its subsequent activation. Interacts with palmitoyltransferase ZDHHC17/HIP14; the interaction does not lead to palmitoylation of OPTN. Interacts with CYLD. Interacts with TOM1; the interaction is indirect and is mediated by MYO6, which acts as a bridge between TOM1 and OPTN. Interacts with USP12; the interaction is independent of USP12 deubiquitinase activity and may be involved in regulation of autophagic flux. Post-translationally, phosphorylated by TBK1, leading to restrict bacterial proliferation in case of infection. Present in aqueous humor of the eye (at protein level).

It localises to the cytoplasm. Its subcellular location is the perinuclear region. The protein localises to the golgi apparatus. It is found in the trans-Golgi network. The protein resides in the cytoplasmic vesicle. It localises to the autophagosome. Its subcellular location is the recycling endosome. Functionally, plays an important role in the maintenance of the Golgi complex, in membrane trafficking, in exocytosis, through its interaction with myosin VI and Rab8. Links myosin VI to the Golgi complex and plays an important role in Golgi ribbon formation. Negatively regulates the induction of IFNB in response to RNA virus infection. Plays a neuroprotective role in the eye and optic nerve. Probably part of the TNF-alpha signaling pathway that can shift the equilibrium toward induction of cell death. May act by regulating membrane trafficking and cellular morphogenesis via a complex that contains Rab8 and huntingtin (HD). Mediates the interaction of Rab8 with the probable GTPase-activating protein TBC1D17 during Rab8-mediated endocytic trafficking, such as that of transferrin receptor (TFRC/TfR); regulates Rab8 recruitment to tubules emanating from the endocytic recycling compartment. Autophagy receptor that interacts directly with both the cargo to become degraded and an autophagy modifier of the MAP1 LC3 family; targets ubiquitin-coated bacteria (xenophagy) and appears to function in the same pathway as SQSTM1 and CALCOCO2/NDP52. In Macaca mulatta (Rhesus macaque), this protein is Optineurin (OPTN).